The sequence spans 557 residues: Formate--tetrahydrofolate ligase (557 aa).

65 to 72 (TPAGEGKT) provides a ligand contact to ATP.

The protein belongs to the formate--tetrahydrofolate ligase family.

The catalysed reaction is (6S)-5,6,7,8-tetrahydrofolate + formate + ATP = (6R)-10-formyltetrahydrofolate + ADP + phosphate. It functions in the pathway one-carbon metabolism; tetrahydrofolate interconversion. The polypeptide is Formate--tetrahydrofolate ligase (Methylococcus capsulatus (strain ATCC 33009 / NCIMB 11132 / Bath)).